Consider the following 100-residue polypeptide: Tetrahydromethanopterin S-methyltransferase subunit B (100 aa).

A helical transmembrane segment spans residues 80–100 (KLTNIVYGFILGLIILFALLL).

It belongs to the MtrB family. In terms of assembly, the complex is composed of 8 subunits; MtrA, MtrB, MtrC, MtrD, MtrE, MtrF, MtrG and MtrH.

It localises to the cell membrane. The catalysed reaction is 5-methyl-5,6,7,8-tetrahydromethanopterin + coenzyme M + 2 Na(+)(in) = 5,6,7,8-tetrahydromethanopterin + methyl-coenzyme M + 2 Na(+)(out). Its pathway is one-carbon metabolism; methanogenesis from CO(2); methyl-coenzyme M from 5,10-methylene-5,6,7,8-tetrahydromethanopterin: step 2/2. Functionally, part of a complex that catalyzes the formation of methyl-coenzyme M and tetrahydromethanopterin from coenzyme M and methyl-tetrahydromethanopterin. This is an energy-conserving, sodium-ion translocating step. The sequence is that of Tetrahydromethanopterin S-methyltransferase subunit B from Methanothermobacter marburgensis (strain ATCC BAA-927 / DSM 2133 / JCM 14651 / NBRC 100331 / OCM 82 / Marburg) (Methanobacterium thermoautotrophicum).